The sequence spans 438 residues: Alkylcitrate synthase tstJ (438 aa).

Active-site residues include histidine 309 and aspartate 365.

The protein belongs to the citrate synthase family.

The catalysed reaction is (2E,10E)-dode-2,10-dicenoyl-CoA + oxaloacetate + H2O = (4E,11E)-2-hydroxytrideca-4,11-dien-1,2,3-tricarboxylate + CoA + H(+). Its pathway is secondary metabolite biosynthesis. Its function is as follows. Alkylcitrate synthase; part of the gene cluster that mediates the biosynthesis of the antihypercholesterolemic agents phomoidrides which are dimeric anhydrides. Within the pathway, the alkylcitrate synthase (ACS) tstJ and the alkylcitrate dehydratase (ACDH) tstI produce the decarboxylated monomeric anhydrides by coupling the C12-fatty acyl product from phiA with oxalacetic acid. The pathway begins with the highly reducing polyketide synthase tstA that catalyzes the formation of a C12-fatty acyl-ACP, starting from one acetate and 5 malonate units. The hydrolase tstM is involved in the release of the C12-fatty acyl chain from phiA. The alkylcitrate synthase (ACS) tstJ and the alkylcitrate dehydratase (ACDH) tstI then give rise to decarboxylated monomeric anhydrides by coupling the C12-fatty acyl chain with oxalacetic acid. The cyclase tstC is responsible for the dimerization of the monomeric anhydrides which leads to the production of prephomoidride that contains the characteristic bicyclo[4.3.1]deca-1,6-diene system of phomoidrides. Iterative oxidation catalyzed by the alpha-ketoglutarate-dependent dioxygenase tstK produced then phomoidride A. Finally, the methyltransferase tstE converts phomoidride A to phomoidride B via an acetalization reaction. The phosphatidylethanolamine-binding protein tstB and tstN are not essential for dimerization and their functions have still to be determined. In Talaromyces stipitatus (strain ATCC 10500 / CBS 375.48 / QM 6759 / NRRL 1006) (Penicillium stipitatum), this protein is Alkylcitrate synthase tstJ.